Here is a 140-residue protein sequence, read N- to C-terminus: Cell division protein SepF (140 aa).

The disordered stretch occupies residues 15–47 (DSQYEEPTEASQAAAPTESATNTRSTPKVVPMQ).

The protein belongs to the SepF family. As to quaternary structure, homodimer. Interacts with FtsZ.

The protein localises to the cytoplasm. Cell division protein that is part of the divisome complex and is recruited early to the Z-ring. Probably stimulates Z-ring formation, perhaps through the cross-linking of FtsZ protofilaments. Its function overlaps with FtsA. The chain is Cell division protein SepF from Lactiplantibacillus plantarum (strain ATCC BAA-793 / NCIMB 8826 / WCFS1) (Lactobacillus plantarum).